The sequence spans 488 residues: Bifunctional protein HldE (488 aa).

The tract at residues 1–331 (MTELSALVER…VALHREDLTL (331 aa)) is ribokinase. 206 to 209 (NRKE) is a binding site for ATP. Residue Asp-276 is part of the active site. Positions 358 to 488 (FTNGCFDLLH…TNTIKKMNGN (131 aa)) are cytidylyltransferase.

This sequence in the N-terminal section; belongs to the carbohydrate kinase PfkB family. The protein in the C-terminal section; belongs to the cytidylyltransferase family. Homodimer.

The catalysed reaction is D-glycero-beta-D-manno-heptose 7-phosphate + ATP = D-glycero-beta-D-manno-heptose 1,7-bisphosphate + ADP + H(+). It catalyses the reaction D-glycero-beta-D-manno-heptose 1-phosphate + ATP + H(+) = ADP-D-glycero-beta-D-manno-heptose + diphosphate. It functions in the pathway nucleotide-sugar biosynthesis; ADP-L-glycero-beta-D-manno-heptose biosynthesis; ADP-L-glycero-beta-D-manno-heptose from D-glycero-beta-D-manno-heptose 7-phosphate: step 1/4. It participates in nucleotide-sugar biosynthesis; ADP-L-glycero-beta-D-manno-heptose biosynthesis; ADP-L-glycero-beta-D-manno-heptose from D-glycero-beta-D-manno-heptose 7-phosphate: step 3/4. Its function is as follows. Catalyzes the phosphorylation of D-glycero-D-manno-heptose 7-phosphate at the C-1 position to selectively form D-glycero-beta-D-manno-heptose-1,7-bisphosphate. In terms of biological role, catalyzes the ADP transfer from ATP to D-glycero-beta-D-manno-heptose 1-phosphate, yielding ADP-D-glycero-beta-D-manno-heptose. The sequence is that of Bifunctional protein HldE from Paramagnetospirillum magneticum (strain ATCC 700264 / AMB-1) (Magnetospirillum magneticum).